Reading from the N-terminus, the 135-residue chain is C-type lectin APL (135 aa).

Intrachain disulfides connect cysteine 3–cysteine 14, cysteine 31–cysteine 131, cysteine 38–cysteine 133, and cysteine 106–cysteine 123. Residues 10–132 (MNGLCYKIFD…CESKNAFLCQ (123 aa)) enclose the C-type lectin domain. The Ca(2+) site is built by glutamine 96, aspartate 98, glutamate 104, asparagine 119, and aspartate 120. The Galactose-binding signature appears at 96–98 (QPD).

This sequence belongs to the true venom lectin family. In terms of assembly, homodimer; disulfide-linked. Expressed by the venom gland.

It localises to the secreted. Its function is as follows. Beta-galactoside lectin that agglutinates rabbit and human erythrocytes in a calcium-dependent fashion (MHC is 0.21 ug/ml on rabbit erythrocytes). Galactose (15 mM), lactose (20 mM), rhamnose (20 mM) and EGTA strongly inhibit this activity. This chain is C-type lectin APL, found in Agkistrodon piscivorus piscivorus (Eastern cottonmouth).